The primary structure comprises 653 residues: Laccase ustL (653 aa).

An N-terminal signal peptide occupies residues 1-20 (MTSLTGLALLLCVLASQSWA). 2 Plastocyanin-like domains span residues 31-143 (WEKG…RPKR) and 173-362 (VLSD…ATQV). Asn-74, Asn-220, Asn-235, Asn-255, Asn-277, Asn-405, Asn-463, and Asn-479 each carry an N-linked (GlcNAc...) asparagine glycan. A Plastocyanin-like 3 domain is found at 463–594 (NQTVGTEDEK…GGMSIALLDG (132 aa)). Residues His-501, His-504, His-506, His-576, Cys-577, His-578, and His-582 each contribute to the Cu cation site. Residue Asn-623 is glycosylated (N-linked (GlcNAc...) asparagine).

Belongs to the multicopper oxidase family.

The enzyme catalyses 4 norrubrofusarin + O2 = 2 ustilaginoidin A + 2 H2O. Its pathway is secondary metabolite biosynthesis. Its function is as follows. Laccase; part of the gene cluster that mediates the biosynthesis of ustilaginoidins, dimeric gamma-naphthopyrones isolated from different fungal species. The first step in the biosynthesis of ustilaginoidins is the production of gamma-naphthopyrone precursor YWA1 by the non-reducing polyketide synthase ustP, via condensation of one acetyl-CoA starter unit with 6 malonyl-CoA units. YWA1 is then probably substrate of the ustZ to yield norrubrofusarin via a dehydration reaction. A key enzyme in the biosynthetic pathway is the laccase ustL, which catalyzes the oxidative dimerization of norrubrofusarin to ustilaginoidin A. It can produce the M- and P-atropisomers in varying amounts, depending on the reaction conditions. For the biosynthesis of 3-methylustilaginoid in derivatives such as chaetochromin A, a methylated derivative of YWA1 is required. The C-methylation is considered to be catalyzed by ustM, the phosphopantetheine attachment site of which indicates that it acts on the growing polyketide chain before release of the product. For the biosynthesis of chaetochromin A, it is assumed that saturation of the D2 double bond takes place before dimerization, and is probably catalyzed by an external reductase because no candidate gene was identified within the cluster. This chain is Laccase ustL, found in Ustilaginoidea virens (Rice false smut fungus).